Here is a 390-residue protein sequence, read N- to C-terminus: Elongation factor Tu 2 (390 aa).

Residues 10–201 form the tr-type G domain; it reads KPHVNVGTIG…LDDYVEVPPR (192 aa). The tract at residues 19–26 is G1; the sequence is GHVDHGKT. 19-26 contributes to the GTP binding site; it reads GHVDHGKT. Threonine 26 contributes to the Mg(2+) binding site. Positions 55 to 59 are G2; it reads GITIA. The G3 stretch occupies residues 76–79; the sequence is DCPG. Residues 76–80 and 131–134 contribute to the GTP site; these read DCPGH and NKAD. A G4 region spans residues 131-134; that stretch reads NKAD. The tract at residues 168-170 is G5; it reads SAL.

It belongs to the TRAFAC class translation factor GTPase superfamily. Classic translation factor GTPase family. EF-Tu/EF-1A subfamily. In terms of assembly, monomer.

The protein localises to the cytoplasm. It catalyses the reaction GTP + H2O = GDP + phosphate + H(+). Functionally, GTP hydrolase that promotes the GTP-dependent binding of aminoacyl-tRNA to the A-site of ribosomes during protein biosynthesis. The protein is Elongation factor Tu 2 of Wolbachia sp. subsp. Brugia malayi (strain TRS).